The primary structure comprises 492 residues: Protein adenylyltransferase Fic (492 aa).

A compositionally biased stretch (low complexity) spans Met-1–Gln-17. Residues Met-1 to Pro-21 form a disordered region. Residues Leu-33–Ser-55 form a helical membrane-spanning segment. TPR repeat units follow at residues Ala-118–His-151 and Pro-152–Asn-186. The Inhibitory (S/T)XXXE(G/N) motif motif lies at Ser-243–Gly-248. ATP-binding positions include Glu-247 and Val-328–His-331. Residues Ile-297–Asp-432 enclose the Fido domain. His-375 is a catalytic residue. ATP contacts are provided by residues Asp-379–Arg-386, Tyr-411–Tyr-412, and Asn-419.

It belongs to the fic family. As to quaternary structure, homodimer.

It is found in the membrane. The enzyme catalyses L-tyrosyl-[protein] + ATP = O-(5'-adenylyl)-L-tyrosyl-[protein] + diphosphate. The catalysed reaction is L-threonyl-[protein] + ATP = 3-O-(5'-adenylyl)-L-threonyl-[protein] + diphosphate. It carries out the reaction 3-O-(5'-adenylyl)-L-threonyl-[protein] + H2O = L-threonyl-[protein] + AMP + H(+). Its activity is regulated as follows. The side chain of Glu-247 determines which of the two opposing activities (AMPylase or de-AMPylase) will take place. In response to endoplasmic reticulum stress, mediates de-AMPylase activity. Adenylyltransferase activity is inhibited by the inhibitory helix present at the N-terminus: Glu-247 binds ATP and competes with ATP-binding at Arg-386, thereby preventing adenylyltransferase activity. In unstressed cells, disengagement of Glu-247 promotes adenylyltransferase activity. Activation dissociates ATP-binding from Glu-247, allowing ordered binding of the entire ATP moiety with the alpha-phosphate in an orientation that is productive for accepting an incoming target hydroxyl side chain. Protein that can both mediate the addition of adenosine 5'-monophosphate (AMP) to specific residues of target proteins (AMPylation), and the removal of the same modification from target proteins (de-AMPylation), depending on the context. The side chain of Glu-247 determines which of the two opposing activities (AMPylase or de-AMPylase) will take place. Acts as a key regulator of the unfolded protein response (UPR) by mediating AMPylation or de-AMPylation of Hsc70-3/BiP. In unstressed cells, acts as an adenylyltransferase by mediating AMPylation of Hsc70-3/BiP at 'Thr-518', thereby inactivating it. In response to endoplasmic reticulum stress, acts as a phosphodiesterase by mediating removal of ATP (de-AMPylation) from Hsc70-3/BiP at 'Thr-518', leading to restore HSPA5/BiP activity. In Drosophila simulans (Fruit fly), this protein is Protein adenylyltransferase Fic.